Reading from the N-terminus, the 105-residue chain is Large ribosomal subunit protein bL21 (105 aa).

The protein belongs to the bacterial ribosomal protein bL21 family. As to quaternary structure, part of the 50S ribosomal subunit. Contacts protein L20.

Its function is as follows. This protein binds to 23S rRNA in the presence of protein L20. This chain is Large ribosomal subunit protein bL21, found in Frankia casuarinae (strain DSM 45818 / CECT 9043 / HFP020203 / CcI3).